Consider the following 287-residue polypeptide: Homoserine kinase (287 aa).

Residue P78 to T88 coordinates ATP.

Belongs to the GHMP kinase family. Homoserine kinase subfamily.

It localises to the cytoplasm. The enzyme catalyses L-homoserine + ATP = O-phospho-L-homoserine + ADP + H(+). Its pathway is amino-acid biosynthesis; L-threonine biosynthesis; L-threonine from L-aspartate: step 4/5. Its function is as follows. Catalyzes the ATP-dependent phosphorylation of L-homoserine to L-homoserine phosphate. The sequence is that of Homoserine kinase from Lactobacillus gasseri (strain ATCC 33323 / DSM 20243 / BCRC 14619 / CIP 102991 / JCM 1131 / KCTC 3163 / NCIMB 11718 / NCTC 13722 / AM63).